The following is a 202-amino-acid chain: Transcription factor IBH1 (202 aa).

Over residues 1 to 16 the composition is skewed to pro residues; sequence MDAKRTPPPPTPPNPN. The tract at residues 1 to 33 is disordered; that stretch reads MDAKRTPPPPTPPNPNPSVIGSGAAADGGGFGR. The bHLH domain occupies 136 to 185; that stretch reads TSAAARAVPPPPRQQGEPPRADALRRLVPGGAGMEYSSLLEETADYLRSL.

The protein belongs to the bHLH protein family. In terms of assembly, interacts with ILI1.

Its function is as follows. Atypical and probable non DNA-binding bHLH transcription factor that acts as a negative regulator of cell elongation and plant development. Binds the transcription factor ILI1 and forms a heterodimer of antagonistic bHLH transcription factors that function downstream of BZR1 to mediate brassinosteroid regulation of cell elongation and lamina inclination. This Oryza sativa subsp. indica (Rice) protein is Transcription factor IBH1 (IBH1).